Consider the following 124-residue polypeptide: Large ribosomal subunit protein bL12 (124 aa).

This sequence belongs to the bacterial ribosomal protein bL12 family. As to quaternary structure, homodimer. Part of the ribosomal stalk of the 50S ribosomal subunit. Forms a multimeric L10(L12)X complex, where L10 forms an elongated spine to which 2 to 4 L12 dimers bind in a sequential fashion. Binds GTP-bound translation factors.

Functionally, forms part of the ribosomal stalk which helps the ribosome interact with GTP-bound translation factors. Is thus essential for accurate translation. This chain is Large ribosomal subunit protein bL12, found in Borreliella burgdorferi (strain ZS7) (Borrelia burgdorferi).